We begin with the raw amino-acid sequence, 457 residues long: Endo-1,3(4)-beta-glucanase ARB_04519 (457 aa).

An N-terminal signal peptide occupies residues methionine 1–alanine 18. The 301-residue stretch at threonine 19–alanine 319 folds into the GH16 domain. Glutamate 130 acts as the Nucleophile in catalysis. Catalysis depends on glutamate 135, which acts as the Proton donor. The N-linked (GlcNAc...) asparagine glycan is linked to asparagine 200. Residues threonine 318–alanine 397 are disordered. The segment covering threonine 333–threonine 352 has biased composition (low complexity). Positions glutamine 353–threonine 362 are enriched in polar residues. Positions proline 368–glutamine 378 are enriched in low complexity.

It belongs to the glycosyl hydrolase 16 family.

Its subcellular location is the secreted. The catalysed reaction is Endohydrolysis of (1-&gt;3)- or (1-&gt;4)-linkages in beta-D-glucans when the glucose residue whose reducing group is involved in the linkage to be hydrolyzed is itself substituted at C-3.. Functionally, mixed-linked glucanase involved in the degradation of complex natural cellulosic substrates. Active on laminarin. lichenan, soluble carboxymethyl cellulose but not on pustulan. The protein is Endo-1,3(4)-beta-glucanase ARB_04519 of Arthroderma benhamiae (strain ATCC MYA-4681 / CBS 112371) (Trichophyton mentagrophytes).